The chain runs to 236 residues: ATP synthase subunit a (236 aa).

Helical transmembrane passes span 18 to 38 (STVM…FIST), 79 to 99 (GITL…FSIV), 112 to 132 (DPTV…FYGV), 174 to 194 (IYAG…GAVG), and 205 to 227 (WQGF…TMVY).

This sequence belongs to the ATPase A chain family. F-type ATPases have 2 components, CF(1) - the catalytic core - and CF(0) - the membrane proton channel. CF(1) has five subunits: alpha(3), beta(3), gamma(1), delta(1), epsilon(1). CF(0) has three main subunits: a(1), b(2) and c(9-12). The alpha and beta chains form an alternating ring which encloses part of the gamma chain. CF(1) is attached to CF(0) by a central stalk formed by the gamma and epsilon chains, while a peripheral stalk is formed by the delta and b chains.

The protein resides in the cell membrane. Its function is as follows. Key component of the proton channel; it plays a direct role in the translocation of protons across the membrane. This is ATP synthase subunit a from Lysinibacillus sphaericus (strain C3-41).